The sequence spans 440 residues: Eukaryotic translation initiation factor 3 subunit E (440 aa).

The PCI domain maps to 219 to 392; sequence VYFNYPKGRD…GQVVMGAKTT (174 aa).

It belongs to the eIF-3 subunit E family. As to quaternary structure, component of the eukaryotic translation initiation factor 3 (eIF-3) complex.

The protein resides in the cytoplasm. Functionally, component of the eukaryotic translation initiation factor 3 (eIF-3) complex, which is involved in protein synthesis of a specialized repertoire of mRNAs and, together with other initiation factors, stimulates binding of mRNA and methionyl-tRNAi to the 40S ribosome. The eIF-3 complex specifically targets and initiates translation of a subset of mRNAs involved in cell proliferation. This is Eukaryotic translation initiation factor 3 subunit E from Brugia malayi (Filarial nematode worm).